Here is a 477-residue protein sequence, read N- to C-terminus: Cytochrome P450 716A1 (477 aa).

The chain crosses the membrane as a helical span at residues 2–22 (YMAIMIILFLSSILLSLLLLL). C424 provides a ligand contact to heme.

Belongs to the cytochrome P450 family. Requires heme as cofactor.

The protein resides in the membrane. Its function is as follows. Possesses triterpene oxidizing activity. Catalyzes the C28 hydroxylation of alpha-amyrin, beta-amyrin, and lupeol, producing uvaol, erythrodiol, and betulin, respectively. Catalyzes the C28 carboxylation of alpha- and beta-amyrin. The polypeptide is Cytochrome P450 716A1 (Arabidopsis thaliana (Mouse-ear cress)).